We begin with the raw amino-acid sequence, 562 residues long: Phosphoglucomutase-1 (562 aa).

Met-1 is subject to N-acetylmethionine. The residue at position 16 (Lys-16) is an N6-acetyllysine. An alpha-D-glucose 1,6-bisphosphate-binding site is contributed by Arg-23. At Thr-115 the chain carries Phosphothreonine. An alpha-D-glucose 1,6-bisphosphate-binding site is contributed by Ser-117. Ser-117 (phosphoserine intermediate) is an active-site residue. Ser-117 provides a ligand contact to Mg(2+). A phosphoserine mark is found at Ser-117 and Ser-134. Position 185 is a phosphothreonine (Thr-185). A phosphoserine mark is found at Ser-201, Ser-206, and Ser-213. Residues Asp-288, Asp-290, and Asp-292 each coordinate Mg(2+). 2 residues coordinate alpha-D-glucose 1,6-bisphosphate: Asp-292 and Arg-293. An N6-acetyllysine modification is found at Lys-349. Tyr-353 bears the Phosphotyrosine mark. Position 357 (Thr-357) interacts with alpha-D-glucose 1,6-bisphosphate. Phosphoserine is present on Ser-369. 3 residues coordinate alpha-D-glucose 1,6-bisphosphate: Glu-376, Ser-378, and Lys-389. The residue at position 378 (Ser-378) is a Phosphoserine. Lys-419 carries the post-translational modification N6-succinyllysine. At Thr-467 the chain carries Phosphothreonine; by PAK1. 3 positions are modified to phosphoserine: Ser-477, Ser-485, and Ser-505. Residue Thr-507 is modified to Phosphothreonine. A phosphoserine mark is found at Ser-509 and Ser-541.

This sequence belongs to the phosphohexose mutase family. Monomer. Mg(2+) is required as a cofactor. In terms of processing, phosphorylation at Thr-467 by PAK1 significantly enhances enzymatic activity.

It localises to the cytoplasm. The catalysed reaction is alpha-D-glucose 1-phosphate = alpha-D-glucose 6-phosphate. It carries out the reaction O-phospho-L-seryl-[protein] + alpha-D-glucose 1-phosphate = alpha-D-glucose 1,6-bisphosphate + L-seryl-[protein]. It catalyses the reaction alpha-D-glucose 1,6-bisphosphate + L-seryl-[protein] = O-phospho-L-seryl-[protein] + alpha-D-glucose 6-phosphate. Its activity is regulated as follows. Glucose-1,6-bisphosphate enhances phosphorylation of the active site Ser-117, and thereby increases enzyme activity. In terms of biological role, catalyzes the reversible isomerization of alpha-D-glucose 1-phosphate to alpha-D-glucose 6-phosphate. The mechanism proceeds via the intermediate compound alpha-D-glucose 1,6-bisphosphate. This enzyme participates in both the breakdown and synthesis of glucose. The protein is Phosphoglucomutase-1 (PGM1) of Homo sapiens (Human).